An 86-amino-acid chain; its full sequence is Muscarinic toxin MTX6 (86 aa).

The N-terminal stretch at 1–21 (MKTLLLTLVVVTILCLDLGYT) is a signal peptide. Cystine bridges form between C24/C45, C38/C63, C67/C78, and C79/C84.

It belongs to the three-finger toxin family. Short-chain subfamily. Aminergic toxin sub-subfamily. As to quaternary structure, monomer. In terms of tissue distribution, expressed by the venom gland.

It localises to the secreted. Functionally, binds to the muscarinic acetylcholine receptor (CHRM). This is Muscarinic toxin MTX6 from Ophiophagus hannah (King cobra).